The following is a 275-amino-acid chain: Membrane protein insertase YidC 2 (275 aa).

The first 21 residues, 1 to 21, serve as a signal peptide directing secretion; it reads MKKKNIILISVLLGALLLLTG. The N-palmitoyl cysteine moiety is linked to residue Cys22. Cys22 carries S-diacylglycerol cysteine lipidation. 4 consecutive transmembrane segments (helical) span residues 48–68, 133–153, 174–194, and 212–232; these read FVAKFVGGNYGIAIIITTLLI, QMGCLPLLIQMPILMAFYYAI, MVLAIIAGLVYLAQYFVSMIG, and IMILFVSFTAPSALALYWAVG.

This sequence belongs to the OXA1/ALB3/YidC family. Type 2 subfamily.

It is found in the cell membrane. Its function is as follows. Required for the insertion and/or proper folding and/or complex formation of integral membrane proteins into the membrane. Involved in integration of membrane proteins that insert both dependently and independently of the Sec translocase complex, as well as at least some lipoproteins. The polypeptide is Membrane protein insertase YidC 2 (Listeria monocytogenes serotype 4b (strain F2365)).